We begin with the raw amino-acid sequence, 359 residues long: Olfactory receptor 5T2 (359 aa).

The Extracellular segment spans residues 1 to 64; it reads MSYSIYKSTV…GFTDNLELQT (64 aa). N-linked (GlcNAc...) asparagine glycosylation occurs at Asn-44. The helical transmembrane segment at 65-85 threads the bilayer; it reads IFFFLFLAIYLFTLMGNLGLI. The Cytoplasmic segment spans residues 86-93; the sequence is LVVIRDSQ. A helical transmembrane segment spans residues 94-114; that stretch reads LHKPMYYFLSMLSSVDACYSS. At 115 to 138 the chain is on the extracellular side; the sequence is VITPNMLVDFTTKNKVISFLGCVA. Residues 139-159 traverse the membrane as a helical segment; that stretch reads QVFLACSFGTTECFLLAAMAY. The Cytoplasmic portion of the chain corresponds to 160 to 178; that stretch reads DRYVAIYNPLLYSVSMSPR. Residues 179 to 199 traverse the membrane as a helical segment; it reads VYMPLINASYVAGILHATIHT. Topologically, residues 200-235 are extracellular; it reads VATFSLSFCGANEIRRVFCDIPPLLAISYSDTHTNQ. The helical transmembrane segment at 236–256 threads the bilayer; that stretch reads LLLFYFVGSIELVTILIVLIS. Over 257-276 the chain is Cytoplasmic; that stretch reads YGLILLAILKMYSAEGRRKV. The chain crosses the membrane as a helical span at residues 277–297; the sequence is FSTCGAHLTGVSIYYGTILFM. The Extracellular segment spans residues 298–310; sequence YVRPSSSYASDHD. A helical membrane pass occupies residues 311–331; it reads MIVSIFYTIVIPLLNPVIYSL. Residues 332-359 lie on the Cytoplasmic side of the membrane; that stretch reads RNKDVKDSMKKMFGKNQVINKVYFHTKK.

The protein belongs to the G-protein coupled receptor 1 family.

It localises to the cell membrane. In terms of biological role, odorant receptor. This Homo sapiens (Human) protein is Olfactory receptor 5T2 (OR5T2).